Reading from the N-terminus, the 125-residue chain is SOSS complex subunit C homolog (125 aa).

Residues M43–N77 form a disordered region. The segment covering T67–N77 has biased composition (polar residues).

Belongs to the SOSS-C family.

This is SOSS complex subunit C homolog from Drosophila persimilis (Fruit fly).